The following is a 491-amino-acid chain: UDP-N-acetylmuramate--L-alanine ligase (491 aa).

G126–T132 lines the ATP pocket.

Belongs to the MurCDEF family.

The protein resides in the cytoplasm. The enzyme catalyses UDP-N-acetyl-alpha-D-muramate + L-alanine + ATP = UDP-N-acetyl-alpha-D-muramoyl-L-alanine + ADP + phosphate + H(+). It functions in the pathway cell wall biogenesis; peptidoglycan biosynthesis. In terms of biological role, cell wall formation. The sequence is that of UDP-N-acetylmuramate--L-alanine ligase from Photorhabdus laumondii subsp. laumondii (strain DSM 15139 / CIP 105565 / TT01) (Photorhabdus luminescens subsp. laumondii).